An 814-amino-acid polypeptide reads, in one-letter code: Phenylalanine--tRNA ligase beta subunit (814 aa).

The 115-residue stretch at 39–153 (SKNVNGVVLG…LKHELGTPVS (115 aa)) folds into the tRNA-binding domain. Positions 414–500 (NEDIFIKLRR…RLIGYDRFDL (87 aa)) constitute a B5 domain. Mg(2+) is bound by residues Asp-478, Asp-484, Glu-487, and Glu-488. The FDX-ACB domain maps to 720 to 813 (PIVPKIERDI…IEKSFQTKLR (94 aa)).

This sequence belongs to the phenylalanyl-tRNA synthetase beta subunit family. Type 1 subfamily. Tetramer of two alpha and two beta subunits. Requires Mg(2+) as cofactor.

It is found in the cytoplasm. It catalyses the reaction tRNA(Phe) + L-phenylalanine + ATP = L-phenylalanyl-tRNA(Phe) + AMP + diphosphate + H(+). The sequence is that of Phenylalanine--tRNA ligase beta subunit from Prochlorococcus marinus (strain MIT 9312).